Consider the following 353-residue polypeptide: UPF0283 membrane protein YcjF (353 aa).

Residues 1-19 (MSEPLKPRIDFAEPLKEEP) show a composition bias toward basic and acidic residues. The tract at residues 1–35 (MSEPLKPRIDFAEPLKEEPTSAFKAQQTFSEAESR) is disordered. The next 3 membrane-spanning stretches (helical) occupy residues 70–90 (MVMG…LQWT), 100–120 (VALG…GSVV), and 213–233 (ESTL…FIAW).

This sequence belongs to the UPF0283 family.

The protein localises to the cell inner membrane. The protein is UPF0283 membrane protein YcjF of Salmonella choleraesuis (strain SC-B67).